Reading from the N-terminus, the 182-residue chain is ATP synthase subunit b, chloroplastic (182 aa).

The chain crosses the membrane as a helical span at residues 33–51 (VLNIAILLSGVIYLGRNFL).

It belongs to the ATPase B chain family. F-type ATPases have 2 components, F(1) - the catalytic core - and F(0) - the membrane proton channel. F(1) has five subunits: alpha(3), beta(3), gamma(1), delta(1), epsilon(1). F(0) has four main subunits: a(1), b(1), b'(1) and c(10-14). The alpha and beta chains form an alternating ring which encloses part of the gamma chain. F(1) is attached to F(0) by a central stalk formed by the gamma and epsilon chains, while a peripheral stalk is formed by the delta, b and b' chains.

It localises to the plastid. Its subcellular location is the chloroplast thylakoid membrane. In terms of biological role, f(1)F(0) ATP synthase produces ATP from ADP in the presence of a proton or sodium gradient. F-type ATPases consist of two structural domains, F(1) containing the extramembraneous catalytic core and F(0) containing the membrane proton channel, linked together by a central stalk and a peripheral stalk. During catalysis, ATP synthesis in the catalytic domain of F(1) is coupled via a rotary mechanism of the central stalk subunits to proton translocation. Its function is as follows. Component of the F(0) channel, it forms part of the peripheral stalk, linking F(1) to F(0). This chain is ATP synthase subunit b, chloroplastic, found in Guillardia theta (Cryptophyte).